The following is a 238-amino-acid chain: Orotidine 5'-phosphate decarboxylase (238 aa).

Substrate-binding positions include Asp-10, Lys-32, 59–68 (DLKLHDIPNT), Thr-122, Arg-184, Gln-193, Gly-213, and Arg-214. Lys-61 (proton donor) is an active-site residue.

This sequence belongs to the OMP decarboxylase family. Type 1 subfamily. Homodimer.

The enzyme catalyses orotidine 5'-phosphate + H(+) = UMP + CO2. The protein operates within pyrimidine metabolism; UMP biosynthesis via de novo pathway; UMP from orotate: step 2/2. Catalyzes the decarboxylation of orotidine 5'-monophosphate (OMP) to uridine 5'-monophosphate (UMP). This is Orotidine 5'-phosphate decarboxylase from Bacillus cereus (strain G9842).